Here is a 569-residue protein sequence, read N- to C-terminus: uncharacterized protein (569 aa).

An N-terminal signal peptide occupies residues 1–24 (MKFQRKYWGLLSTLGVSSAVALSA). A lipid anchor (N-palmitoyl cysteine) is attached at Cys25. Cys25 carries S-diacylglycerol cysteine lipidation. 2 disordered regions span residues 111–137 (SNMK…EWEV) and 242–267 (GKNG…KKIE). 2 stretches are compositionally biased toward low complexity: residues 119 to 130 (SSSSSSTGNNGS) and 249 to 260 (KKMTTDSSSTQQ).

This sequence to M.pneumoniae MPN_456 and M.genitalium MG321 N-terminal region.

It localises to the cell membrane. This is an uncharacterized protein from Mycoplasma pneumoniae (strain ATCC 29342 / M129 / Subtype 1) (Mycoplasmoides pneumoniae).